The following is a 427-amino-acid chain: 3-phosphoshikimate 1-carboxyvinyltransferase (427 aa).

3-phosphoshikimate-binding residues include Lys23, Ser24, and Arg28. Position 23 (Lys23) interacts with phosphoenolpyruvate. Positions 97 and 125 each coordinate phosphoenolpyruvate. 3-phosphoshikimate-binding residues include Ser170, Ser171, Gln172, Ser198, Asp314, Asn337, and Lys341. Residue Gln172 participates in phosphoenolpyruvate binding. The Proton acceptor role is filled by Asp314. Phosphoenolpyruvate is bound by residues Arg345, Arg387, and Lys412.

The protein belongs to the EPSP synthase family. In terms of assembly, monomer.

The protein localises to the cytoplasm. The catalysed reaction is 3-phosphoshikimate + phosphoenolpyruvate = 5-O-(1-carboxyvinyl)-3-phosphoshikimate + phosphate. It participates in metabolic intermediate biosynthesis; chorismate biosynthesis; chorismate from D-erythrose 4-phosphate and phosphoenolpyruvate: step 6/7. Catalyzes the transfer of the enolpyruvyl moiety of phosphoenolpyruvate (PEP) to the 5-hydroxyl of shikimate-3-phosphate (S3P) to produce enolpyruvyl shikimate-3-phosphate and inorganic phosphate. The polypeptide is 3-phosphoshikimate 1-carboxyvinyltransferase (Buchnera aphidicola subsp. Baizongia pistaciae (strain Bp)).